We begin with the raw amino-acid sequence, 462 residues long: CD-NTase-associated protein 4 (462 aa).

The segment at 1-226 (MSASLLEKQS…FENFICHALE (226 aa)) is N-terminal endonuclease domain. Active-site residues include Asp-50, Glu-67, and Lys-69. Residue Asp-50 participates in Mg(2+) binding. Positions 235 to 462 (DPIKINLSAS…QYIPTAELNL (228 aa)) are C-terminal SAVED domain. 2',3',3'-c-tri-AMP contacts are provided by residues 299-301 (KQR), Trp-449, and Tyr-454.

The protein belongs to the Cap4 nuclease family. In terms of assembly, a monomer in the absence of ligand, in its presence it forms oligomers. A divalent metal cation is required as a cofactor.

With respect to regulation, DNase activity is activated upon ligand binding. Inhibited by EDTA. Its function is as follows. Effector DNase of a CBASS antivirus system. CBASS (cyclic oligonucleotide-based antiphage signaling system) provides immunity against bacteriophage. The CD-NTase protein synthesizes cyclic nucleotides in response to infection; these serve as specific second messenger signals. The signals activate a diverse range of effectors, leading to bacterial cell death and thus abortive phage infection. A type II-C(AAAA) CBASS system. In terms of biological role, binds cyclic nucleotide second messengers (synthesized by CdnD, the cognate CD-NTase in the CBASS operon). Ligand binding activates it to endonucleolytically degrade dsDNA to approximately 6 bp length fragments, with a preference for 5'-C or 5'-G cleavage site. The minor product of CdnD is the activating nucleotide; also binds the major product (2',3',3'-cyclic AMP-AMP-AMP) but is not activated by it. Only binds DNA in the presence of ligand. Is not activated by c-di-AMP, c-di-GMP, 3'3'-cyclic GMP-AMP (3'3'-cGAMP) or 3',3',3'-cyclic AMP-AMP-GMP. This Acinetobacter sp. (strain ATCC 27244 / 9458) protein is CD-NTase-associated protein 4.